The primary structure comprises 395 residues: Extracellular cysteine protease (395 aa).

Positions 1–30 (MKKKLSYMITIMLAFTLSLALGLFFNSAHA) are cleaved as a signal peptide. Residues 31–221 (DSLPQKNGAN…TLEYQSTRNE (191 aa)) constitute a propeptide that is removed on maturation. Active-site residues include Cys-245, His-341, and Asn-362.

Belongs to the peptidase C47 family. In terms of processing, proteolytically cleaved.

It localises to the secreted. The protein localises to the cell wall. In terms of biological role, cysteine protease able to cleave elastin, insulin, myoglobin, fibronectin, fibrinogen, HMW-kininogen, alpha-1-protease inhibitor and alpha-1-antitrypsin. Along with other extracellular proteases may contribute to the colonization and infection of human tissues. The protein is Extracellular cysteine protease (ecpA) of Staphylococcus epidermidis (strain ATCC 35984 / DSM 28319 / BCRC 17069 / CCUG 31568 / BM 3577 / RP62A).